Consider the following 187-residue polypeptide: POM121 and ZP3 fusion protein (187 aa).

Residues 166–187 (GTPSHSRRQPRVVSQWSTSASL) are disordered. The span at 177-187 (VVSQWSTSASL) shows a compositional bias: polar residues.

In terms of tissue distribution, expressed in spleen, thymus, pancreas, testis, ovary, small intestine, colon and lymphocytes.

This chain is POM121 and ZP3 fusion protein (POMZP3), found in Homo sapiens (Human).